The primary structure comprises 243 residues: Pyridoxine 5'-phosphate synthase (243 aa).

Asn9 is a binding site for 3-amino-2-oxopropyl phosphate. Asp11–His12 contributes to the 1-deoxy-D-xylulose 5-phosphate binding site. Arg20 is a 3-amino-2-oxopropyl phosphate binding site. His45 (proton acceptor) is an active-site residue. 1-deoxy-D-xylulose 5-phosphate is bound by residues Arg47 and His52. The Proton acceptor role is filled by Glu72. Thr102 lines the 1-deoxy-D-xylulose 5-phosphate pocket. Catalysis depends on His193, which acts as the Proton donor. 3-amino-2-oxopropyl phosphate contacts are provided by residues Gly194 and Gly215–His216.

The protein belongs to the PNP synthase family. In terms of assembly, homooctamer; tetramer of dimers.

It is found in the cytoplasm. It catalyses the reaction 3-amino-2-oxopropyl phosphate + 1-deoxy-D-xylulose 5-phosphate = pyridoxine 5'-phosphate + phosphate + 2 H2O + H(+). The protein operates within cofactor biosynthesis; pyridoxine 5'-phosphate biosynthesis; pyridoxine 5'-phosphate from D-erythrose 4-phosphate: step 5/5. Catalyzes the complicated ring closure reaction between the two acyclic compounds 1-deoxy-D-xylulose-5-phosphate (DXP) and 3-amino-2-oxopropyl phosphate (1-amino-acetone-3-phosphate or AAP) to form pyridoxine 5'-phosphate (PNP) and inorganic phosphate. This is Pyridoxine 5'-phosphate synthase from Pseudoalteromonas translucida (strain TAC 125).